The following is a 621-amino-acid chain: MTDNAPITFDGKRFAAHLSTAPGVYRMYAADDTLLYVGKAGALRKRVASYFNGTPKNTRLTAMLAQVVRMDVTITRNEAEALLLENQLIKSLTPRYNVLLRDDKSYPYVLLTREAWPRIALHRGPQIVPGRYFGPYPGMTAVRDMLNLIHKLFKLRSCEDSVFRNRSRPCLQYQIGRCSAPCVNVVTHDNYTEAVHRVTLFLEGKSDLLAEELIQAMQVASEHLEFEQAARLRDLLTSLRSMQNRQYVDGRAADLDVLACAALSGHACVLLLSFRDGRNLGTRMFFPKTNGEERTAEILSAFVSQYYAEYPPPPEILLDQEIPDHTLLEAAFSRSSAHKISLRWNVRGERAGYVELAVRNAQVALSTELTSQRAQRVRSEAVRQLLGLEGPIKRVECFDISHTMGEATVASCVVFDAVGPVRSQYRRYNITGITPGDDYAAMRQAIERRFRRAVEEDKQGERPDVLFIDGGAGQLAQAKMALNAVGVESVLLVGVSKGEERRAGHETLIMLDGQELHPGAASPALQFIQQVRDEAHRFAITGHRARRQKTRMTSKLEDIPGIGSRRRANLLKHFGGLAGVKAAGQTEIARVEGISTALAAKIYASLHGLSKNDAANASRVS.

The GIY-YIG domain maps to 20 to 98; the sequence is TAPGVYRMYA…IKSLTPRYNV (79 aa). The UVR domain occupies 207–242; sequence DLLAEELIQAMQVASEHLEFEQAARLRDLLTSLRSM.

This sequence belongs to the UvrC family. Interacts with UvrB in an incision complex.

The protein resides in the cytoplasm. In terms of biological role, the UvrABC repair system catalyzes the recognition and processing of DNA lesions. UvrC both incises the 5' and 3' sides of the lesion. The N-terminal half is responsible for the 3' incision and the C-terminal half is responsible for the 5' incision. In Xylella fastidiosa (strain Temecula1 / ATCC 700964), this protein is UvrABC system protein C.